The primary structure comprises 1427 residues: A disintegrin and metalloproteinase with thrombospondin motifs 13 (1427 aa).

Positions 1 to 29 (MHQRHPRARCPPLCVAGILACGFLLGCWG) are cleaved as a signal peptide. The propeptide occupies 30 to 74 (PSHFQQSCLQALEPQAVSSYLSPGAPLKGRPPSPGFQRQRQRQRR). Residues 51-70 (SPGAPLKGRPPSPGFQRQRQ) form a disordered region. A Peptidase M12B domain is found at 80–286 (LHLELLVAVG…GRARCVWDPP (207 aa)). E83 provides a ligand contact to Ca(2+). N142 and N146 each carry an N-linked (GlcNAc...) asparagine glycan. Disulfide bonds link C155–C208, C202–C281, and C242–C265. Ca(2+) is bound by residues D173, D182, E184, D187, and E212. H224 is a Zn(2+) binding site. E225 is an active-site residue. Zn(2+)-binding residues include H228 and H234. Residues C281 and D284 each contribute to the Ca(2+) site. A Disintegrin domain is found at 287 to 383 (RPQPGSAGHP…LVELTPIAAV (97 aa)). 4 disulfides stabilise this stretch: C311-C337, C322-C347, C332-C366, and C360-C371. Residues 384-439 (HGRWSSWGPRSPCSRSCGGGVVTRRRQCNNPRPAFGGRACVGADLQAEMCNTQACE) enclose the TSP type-1 1 domain. W387 is a glycosylation site (C-linked (Man) tryptophan). 8 cysteine pairs are disulfide-bonded: C396–C433, C400–C438, C411–C423, C450–C487, C483–C522, C508–C527, C532–C548, and C545–C555. S399 is a glycosylation site (O-linked (Fuc...) serine). The interval 440–556 (KTQLEFMSQQ…VCGGDNSTCS (117 aa)) is cysteine-rich. Residues 498–500 (RGD) carry the Cell attachment site motif. N-linked (GlcNAc...) asparagine glycans are attached at residues N552, N579, and N614. Residues 556-685 (SPRKGSFTAG…TYFQPKPRQA (130 aa)) form a spacer region. A glycan (N-linked (GlcNAc...) (complex) asparagine) is linked at N667. TSP type-1 domains are found at residues 682 to 730 (PRQA…SQQP), 742 to 805 (CPPY…QPCP), 808 to 859 (WEVS…PEPC), 896 to 950 (VWTP…QAVP), 951 to 1011 (CPAR…SLEP), 1012 to 1068 (CPPR…VPCL), and 1072 to 1131 (CTYR…GPCV). S698 carries an O-linked (Fuc...) serine glycan. Residue N707 is glycosylated (N-linked (GlcNAc...) (complex) asparagine). S757 carries O-linked (Fuc...) serine glycosylation. N828 carries an N-linked (GlcNAc...) asparagine glycan. O-linked (Fuc...) serine glycans are attached at residues S907, S965, S1027, and S1087. 2 consecutive CUB domains span residues 1192–1298 (CGRQ…FYRE) and 1299–1427 (CDMQ…KEGT). Residues N1235 and N1354 are each glycosylated (N-linked (GlcNAc...) asparagine).

Zn(2+) serves as cofactor. Ca(2+) is required as a cofactor. In terms of processing, glycosylated. O-fucosylated by POFUT2 on a serine or a threonine residue found within the consensus sequence C1-X(2)-(S/T)-C2-G of the TSP type-1 repeat domains where C1 and C2 are the first and second cysteine residue of the repeat, respectively. Fucosylated repeats can then be further glycosylated by the addition of a beta-1,3-glucose residue by the glucosyltransferase, B3GALTL. Fucosylation mediates the efficient secretion of ADAMTS13. May also be C-glycosylated on tryptophan residues within the consensus sequence W-X-X-W of the TPRs, and also N-glycosylated. These other glycosylations can also facilitate secretion. The precursor is processed by a furin endopeptidase which cleaves off the pro-domain. Plasma. Expressed primarily in liver.

The protein localises to the secreted. It carries out the reaction The enzyme cleaves the von Willebrand factor at bond 842-Tyr-|-Met-843 within the A2 domain.. Its activity is regulated as follows. Zinc and calcium ions cooperatively modulate enzyme activity. The cleavage of the pro-domain is not required for protease activity. Dependence on calcium for proteolytic activity is mediated by the high affinity site. Cleaves the vWF multimers in plasma into smaller forms thereby controlling vWF-mediated platelet thrombus formation. The polypeptide is A disintegrin and metalloproteinase with thrombospondin motifs 13 (ADAMTS13) (Homo sapiens (Human)).